Here is a 150-residue protein sequence, read N- to C-terminus: Ribonuclease H (150 aa).

One can recognise an RNase H type-1 domain in the interval 7–148; that stretch reads ESNIVEIWTD…ADQLATKARM (142 aa). Aspartate 16, glutamate 54, aspartate 76, and aspartate 140 together coordinate Mg(2+).

Belongs to the RNase H family. Monomer. The cofactor is Mg(2+).

It is found in the cytoplasm. The enzyme catalyses Endonucleolytic cleavage to 5'-phosphomonoester.. Its function is as follows. Endonuclease that specifically degrades the RNA of RNA-DNA hybrids. The polypeptide is Ribonuclease H (Granulibacter bethesdensis (strain ATCC BAA-1260 / CGDNIH1)).